The following is a 425-amino-acid chain: UPF0597 protein VP2173 (425 aa).

This sequence belongs to the UPF0597 family.

This Vibrio parahaemolyticus serotype O3:K6 (strain RIMD 2210633) protein is UPF0597 protein VP2173.